Reading from the N-terminus, the 563-residue chain is Tripeptidyl-peptidase 1 (563 aa).

Positions 1–19 are cleaved as a signal peptide; the sequence is MGLQACLLGLFALILSGKC. The propeptide at 20-195 is removed in mature form; the sequence is SYSPEPDQRR…PEPQVTGTVG (176 aa). A disulfide bond links Cys-111 and Cys-122. The region spanning 199–563 is the Peptidase S53 domain; the sequence is GVTPSVIRKR…PALLKTLLNP (365 aa). Residues Asn-210 and Asn-222 are each glycosylated (N-linked (GlcNAc...) asparagine). Catalysis depends on charge relay system residues Glu-272 and Asp-276. N-linked (GlcNAc...) asparagine glycosylation is found at Asn-286, Asn-313, and Asn-443. Disulfide bonds link Cys-365–Cys-526 and Cys-522–Cys-537. Ser-475 (charge relay system) is an active-site residue. Ca(2+) contacts are provided by Asp-517 and Val-518. Ca(2+) is bound by residues Gly-539, Gly-541, and Asp-543.

Monomer. Interacts with CLN5. Interacts with CLN3. Ca(2+) is required as a cofactor. In terms of processing, activated by autocatalytic proteolytical processing upon acidification. N-glycosylation is required for processing and activity.

It is found in the lysosome. Its subcellular location is the melanosome. The enzyme catalyses Release of an N-terminal tripeptide from a polypeptide, but also has endopeptidase activity.. Lysosomal serine protease with tripeptidyl-peptidase I activity. May act as a non-specific lysosomal peptidase which generates tripeptides from the breakdown products produced by lysosomal proteinases. Requires substrates with an unsubstituted N-terminus. In Macaca fascicularis (Crab-eating macaque), this protein is Tripeptidyl-peptidase 1 (TPP1).